Consider the following 492-residue polypeptide: Malonate-semialdehyde dehydrogenase (492 aa).

6 residues coordinate NAD(+): F156, K180, E183, K184, S233, and T255. The active-site Nucleophile is the C288. E387 contributes to the NAD(+) binding site.

Belongs to the aldehyde dehydrogenase family. IolA subfamily. In terms of assembly, homotetramer.

The catalysed reaction is 3-oxopropanoate + NAD(+) + CoA + H2O = hydrogencarbonate + acetyl-CoA + NADH + H(+). The enzyme catalyses 2-methyl-3-oxopropanoate + NAD(+) + CoA + H2O = propanoyl-CoA + hydrogencarbonate + NADH + H(+). Its pathway is polyol metabolism; myo-inositol degradation into acetyl-CoA; acetyl-CoA from myo-inositol: step 7/7. Its function is as follows. Catalyzes the oxidation of malonate semialdehyde (MSA) and methylmalonate semialdehyde (MMSA) into acetyl-CoA and propanoyl-CoA, respectively. Is involved in a myo-inositol catabolic pathway. Bicarbonate, and not CO2, is the end-product of the enzymatic reaction. This Lacticaseibacillus casei (Lactobacillus casei) protein is Malonate-semialdehyde dehydrogenase.